Reading from the N-terminus, the 431-residue chain is uncharacterized protein (431 aa).

Disordered stretches follow at residues 17–66 (VDPE…GQQA) and 81–415 (GSVT…ALPR). The segment covering 91-106 (DKADREPAARPRDPRS) has biased composition (basic and acidic residues). Residues 173–195 (TYRRRRPTAATPSRKKKARRGPK) show a composition bias toward basic residues. A compositionally biased stretch (low complexity) spans 235–244 (RTPGPVHSAA). Residues 299–312 (RMGGSSGGRGGTPG) are compositionally biased toward gly residues. Residues 317-342 (RAAPGARPTAPDGAPGRWDGPADGPA) show a composition bias toward low complexity. The span at 343–360 (PGLGRGGWGVGREAGGSG) shows a compositional bias: gly residues.

This is an uncharacterized protein from Homo sapiens (Human).